Reading from the N-terminus, the 155-residue chain is Large ribosomal subunit protein uL11 (155 aa).

The protein belongs to the universal ribosomal protein uL11 family. Part of the ribosomal stalk of the 50S ribosomal subunit. Interacts with L10 and the large rRNA to form the base of the stalk. L10 forms an elongated spine to which L12 dimers bind in a sequential fashion forming a multimeric L10(L12)X complex.

Its function is as follows. Forms part of the ribosomal stalk which helps the ribosome interact with GTP-bound translation factors. This Picrophilus torridus (strain ATCC 700027 / DSM 9790 / JCM 10055 / NBRC 100828 / KAW 2/3) protein is Large ribosomal subunit protein uL11.